The sequence spans 273 residues: Formamidopyrimidine-DNA glycosylase (273 aa).

P2 serves as the catalytic Schiff-base intermediate with DNA. The active-site Proton donor is E3. The Proton donor; for beta-elimination activity role is filled by K57. Residues H91, R110, and K151 each contribute to the DNA site. The FPG-type zinc-finger motif lies at 236 to 270 (QVYGRKDEACNDCGTIIEAKVIGQRNSYFCPHCQM). The Proton donor; for delta-elimination activity role is filled by R260.

The protein belongs to the FPG family. As to quaternary structure, monomer. The cofactor is Zn(2+).

It catalyses the reaction Hydrolysis of DNA containing ring-opened 7-methylguanine residues, releasing 2,6-diamino-4-hydroxy-5-(N-methyl)formamidopyrimidine.. The catalysed reaction is 2'-deoxyribonucleotide-(2'-deoxyribose 5'-phosphate)-2'-deoxyribonucleotide-DNA = a 3'-end 2'-deoxyribonucleotide-(2,3-dehydro-2,3-deoxyribose 5'-phosphate)-DNA + a 5'-end 5'-phospho-2'-deoxyribonucleoside-DNA + H(+). Involved in base excision repair of DNA damaged by oxidation or by mutagenic agents. Acts as a DNA glycosylase that recognizes and removes damaged bases. Has a preference for oxidized purines, such as 7,8-dihydro-8-oxoguanine (8-oxoG). Has AP (apurinic/apyrimidinic) lyase activity and introduces nicks in the DNA strand. Cleaves the DNA backbone by beta-delta elimination to generate a single-strand break at the site of the removed base with both 3'- and 5'-phosphates. The sequence is that of Formamidopyrimidine-DNA glycosylase from Actinobacillus pleuropneumoniae serotype 3 (strain JL03).